The chain runs to 230 residues: N-(5'-phosphoribosyl)anthranilate isomerase (230 aa).

It belongs to the TrpF family.

The enzyme catalyses N-(5-phospho-beta-D-ribosyl)anthranilate = 1-(2-carboxyphenylamino)-1-deoxy-D-ribulose 5-phosphate. The protein operates within amino-acid biosynthesis; L-tryptophan biosynthesis; L-tryptophan from chorismate: step 3/5. This is N-(5'-phosphoribosyl)anthranilate isomerase from Ralstonia nicotianae (strain ATCC BAA-1114 / GMI1000) (Ralstonia solanacearum).